A 129-amino-acid polypeptide reads, in one-letter code: uncharacterized protein (129 aa).

The chain crosses the membrane as a helical span at residues 103–125 (AISSAFQYGLSTSNFFFIFLYIF).

It is found in the membrane. This is an uncharacterized protein from Acanthamoeba polyphaga (Amoeba).